We begin with the raw amino-acid sequence, 123 residues long: Large ribosomal subunit protein uL14 (123 aa).

The protein belongs to the universal ribosomal protein uL14 family. Part of the 50S ribosomal subunit. Forms a cluster with proteins L3 and L19. In the 70S ribosome, L14 and L19 interact and together make contacts with the 16S rRNA in bridges B5 and B8.

In terms of biological role, binds to 23S rRNA. Forms part of two intersubunit bridges in the 70S ribosome. The protein is Large ribosomal subunit protein uL14 of Buchnera aphidicola subsp. Cinara cedri (strain Cc).